Reading from the N-terminus, the 163-residue chain is uncharacterized protein (163 aa).

2 helical membrane-spanning segments follow: residues 7–27 and 51–71; these read YLNEIWLIIGIICILVECYIV and LVIFTLTNQITFFGLFSLVWF.

The protein localises to the cell membrane. This is an uncharacterized protein from Rickettsia prowazekii (strain Madrid E).